We begin with the raw amino-acid sequence, 351 residues long: L-threonine 3-dehydrogenase (351 aa).

A Zn(2+)-binding site is contributed by Cys39. Active-site charge relay system residues include Thr41 and His44. Zn(2+) is bound by residues His64, Glu65, Cys94, Cys97, Cys100, and Cys108. NAD(+) contacts are provided by residues Ile176, Asp196, Arg201, 271-273 (LGI), and 295-296 (IY).

This sequence belongs to the zinc-containing alcohol dehydrogenase family. As to quaternary structure, homotetramer. The cofactor is Zn(2+).

Its subcellular location is the cytoplasm. It carries out the reaction L-threonine + NAD(+) = (2S)-2-amino-3-oxobutanoate + NADH + H(+). It functions in the pathway amino-acid degradation; L-threonine degradation via oxydo-reductase pathway; glycine from L-threonine: step 1/2. Catalyzes the NAD(+)-dependent oxidation of L-threonine to 2-amino-3-ketobutyrate. This chain is L-threonine 3-dehydrogenase, found in Francisella tularensis subsp. holarctica (strain OSU18).